The sequence spans 530 residues: T-complex protein 1 subunit delta (530 aa).

The span at 1-13 shows a compositional bias: polar residues; it reads MVSQAKQPSNATF. The disordered stretch occupies residues 1–20; that stretch reads MVSQAKQPSNATFKNREKPQ.

This sequence belongs to the TCP-1 chaperonin family. In terms of assembly, heterooligomeric complex of about 850 to 900 kDa that forms two stacked rings, 12 to 16 nm in diameter.

Its subcellular location is the cytoplasm. Functionally, molecular chaperone; assists the folding of proteins upon ATP hydrolysis. Known to play a role, in vitro, in the folding of actin and tubulin. The polypeptide is T-complex protein 1 subunit delta (CCT4) (Kluyveromyces lactis (strain ATCC 8585 / CBS 2359 / DSM 70799 / NBRC 1267 / NRRL Y-1140 / WM37) (Yeast)).